The following is a 429-amino-acid chain: UPF0242 protein CT_616 (429 aa).

The protein belongs to the UPF0242 family.

The protein is UPF0242 protein CT_616 of Chlamydia trachomatis serovar D (strain ATCC VR-885 / DSM 19411 / UW-3/Cx).